The following is a 550-amino-acid chain: Zinc finger protein 382 (550 aa).

The mediates interaction with TRIM28 stretch occupies residues 1–105; sequence MPLQGSVSFK…RHSRPLIFIN (105 aa). Represses transcription stretches follow at residues 5–46 and 70–211; these read GSVS…FVSV and IFPS…PEQP. Residues 7–78 enclose the KRAB domain; that stretch reads VSFKDVTVDF…RIFPSYSYLE (72 aa). A C2H2-type 1; degenerate zinc finger spans residues 212 to 234; sequence FDHNECEKSFLMKGMLFTHTRAH. C2H2-type zinc fingers lie at residues 296 to 318, 324 to 346, 352 to 374, 380 to 402, 408 to 430, 436 to 458, 464 to 486, 492 to 514, and 520 to 542; these read FHCP…QRIH, YVCN…EKTH, FICI…HKTH, YECP…QRTH, YQCN…QRTH, YICN…QRIH, YICN…HRIH, NGCP…QKTH, and YECK…QKTH. Positions 296 to 550 are required for transcriptional repression activity; probably mediates sequence-specific DNA-binding; that stretch reads FHCPYCGNNF…THKVETTGIQ (255 aa).

This sequence belongs to the krueppel C2H2-type zinc-finger protein family. As to quaternary structure, interacts with TRIM28; enhances the transcriptional repressor activity. As to expression, specifically expressed in heart with a weaker expression also detected in skeletal muscle.

The protein resides in the nucleus. Functionally, functions as a sequence-specific transcriptional repressor. In Homo sapiens (Human), this protein is Zinc finger protein 382 (ZNF382).